We begin with the raw amino-acid sequence, 65 residues long: Large ribosomal subunit protein bL35 (65 aa).

It belongs to the bacterial ribosomal protein bL35 family.

In Syntrophobacter fumaroxidans (strain DSM 10017 / MPOB), this protein is Large ribosomal subunit protein bL35.